Here is a 221-residue protein sequence, read N- to C-terminus: Putative hemin import ATP-binding protein HrtA (221 aa).

In terms of domain architecture, ABC transporter spans 3-221; the sequence is LVVKDIVKNF…IELEDGKITD (219 aa). Residue 39–46 coordinates ATP; sequence GASGSGKT.

The protein belongs to the ABC transporter superfamily. HrtA family. As to quaternary structure, the complex is composed of two ATP-binding proteins (HrtA), two transmembrane proteins (HrtB) and a solute-binding protein.

The protein localises to the cell membrane. Part of the ABC transporter complex hrt involved in hemin import. Responsible for energy coupling to the transport system. This Staphylococcus aureus (strain MRSA252) protein is Putative hemin import ATP-binding protein HrtA (hrtA).